Reading from the N-terminus, the 309-residue chain is tRNA dimethylallyltransferase (309 aa).

11–18 (GPTASGKS) serves as a coordination point for ATP. Residue 13–18 (TASGKS) participates in substrate binding. Interaction with substrate tRNA stretches follow at residues 36–39 (DSMQ) and 160–164 (QRLIR).

It belongs to the IPP transferase family. In terms of assembly, monomer. Requires Mg(2+) as cofactor.

It catalyses the reaction adenosine(37) in tRNA + dimethylallyl diphosphate = N(6)-dimethylallyladenosine(37) in tRNA + diphosphate. Its function is as follows. Catalyzes the transfer of a dimethylallyl group onto the adenine at position 37 in tRNAs that read codons beginning with uridine, leading to the formation of N6-(dimethylallyl)adenosine (i(6)A). The sequence is that of tRNA dimethylallyltransferase from Rickettsia felis (strain ATCC VR-1525 / URRWXCal2) (Rickettsia azadi).